We begin with the raw amino-acid sequence, 210 residues long: Scoloptoxin SSD976 (210 aa).

The first 23 residues, 1-23 (MNILLSSTLFVLLMFQIIGSGMG), serve as a signal peptide directing secretion.

Post-translationally, contains 3 disulfide bonds. In terms of tissue distribution, expressed by the venom gland.

It localises to the secreted. In terms of biological role, voltage-gated calcium channel inhibitor. The polypeptide is Scoloptoxin SSD976 (Scolopendra dehaani (Thai centipede)).